A 464-amino-acid chain; its full sequence is Methionine aminopeptidase 2 (464 aa).

The segment at 1–86 (MGSKTPGNHR…RKKKKKNTKE (86 aa)) is disordered. Residues 43–54 (GESEGGEDEDDD) are compositionally biased toward acidic residues. Positions 72–83 (KRNKRRKKKKKN) are enriched in basic residues. His216 provides a ligand contact to substrate. Residues Asp237, Asp248, and His317 each coordinate a divalent metal cation. His325 is a binding site for substrate. Residues Glu350 and Glu445 each contribute to the a divalent metal cation site.

The protein belongs to the peptidase M24A family. Methionine aminopeptidase eukaryotic type 2 subfamily. The cofactor is Co(2+). Requires Zn(2+) as cofactor. It depends on Mn(2+) as a cofactor. Fe(2+) serves as cofactor.

It localises to the cytoplasm. It catalyses the reaction Release of N-terminal amino acids, preferentially methionine, from peptides and arylamides.. Functionally, cotranslationally removes the N-terminal methionine from nascent proteins. The N-terminal methionine is often cleaved when the second residue in the primary sequence is small and uncharged (Met-Ala-, Cys, Gly, Pro, Ser, Thr, or Val). This Ajellomyces capsulatus (strain NAm1 / WU24) (Darling's disease fungus) protein is Methionine aminopeptidase 2.